The following is a 283-amino-acid chain: Pantothenate synthetase (283 aa).

Residue 34–41 coordinates ATP; sequence MGALHDGH. H41 functions as the Proton donor in the catalytic mechanism. Residue Q65 coordinates (R)-pantoate. Q65 is a binding site for beta-alanine. Position 152–155 (152–155) interacts with ATP; sequence GEKD. Q158 is a binding site for (R)-pantoate. Residues V181 and 189-192 each bind ATP; that span reads MSSR.

The protein belongs to the pantothenate synthetase family. As to quaternary structure, homodimer.

The protein localises to the cytoplasm. The catalysed reaction is (R)-pantoate + beta-alanine + ATP = (R)-pantothenate + AMP + diphosphate + H(+). It functions in the pathway cofactor biosynthesis; (R)-pantothenate biosynthesis; (R)-pantothenate from (R)-pantoate and beta-alanine: step 1/1. Catalyzes the condensation of pantoate with beta-alanine in an ATP-dependent reaction via a pantoyl-adenylate intermediate. This chain is Pantothenate synthetase, found in Rhodopseudomonas palustris (strain BisB18).